Reading from the N-terminus, the 212-residue chain is Uridine kinase (212 aa).

Residue 13–20 (GASASGKS) coordinates ATP.

Belongs to the uridine kinase family.

It localises to the cytoplasm. The enzyme catalyses uridine + ATP = UMP + ADP + H(+). The catalysed reaction is cytidine + ATP = CMP + ADP + H(+). Its pathway is pyrimidine metabolism; CTP biosynthesis via salvage pathway; CTP from cytidine: step 1/3. The protein operates within pyrimidine metabolism; UMP biosynthesis via salvage pathway; UMP from uridine: step 1/1. The chain is Uridine kinase from Shewanella frigidimarina (strain NCIMB 400).